The primary structure comprises 509 residues: MIMQLGLTSLAFLALKCDAYNIAPKIDTPNVEPFAPSGGLKLLAIVAIIWYVVVLLVAYYGFFEIMQKFSKRKTLPVPPQVEGVTILRPIKGIDPEMELCLQSAFDQDYPKFEIIICVESENDPGIGVAEALIRKYPHVDARILKGDSHNPDHFGPNPKVNNLAKGYSAGKYDIMWILDSNVWVCSGALSRSVDALNRSLDNGRSTFDFQTGKGRKVNLVHHVPMAISINPQTGTNLDEMFLFTSHSKFYISINKAALAPCVNGKSNLYRRSELDLAVKRLGKGSEPSLDGTTGILAKDAAYYGSKPGQGLRFFARYIGEDNMIATALWFQNGGRTGLTGDAAIQPLGGVNSTSLKNYLLRRIRWLRVRKHMVLEATLLEPTTECLLCGTFGTFAISTLFLQSYFNWKFFIFHLLVWMVTDYTQFHILLTNASQDTATCNVPYFAEPNFNAYGSPFESSNLRTFHRWVLYWLLREVLALPIWISAMLGTRIIWRNRPFRINVDLSAEEL.

At Met-1 to Leu-42 the chain is on the lumenal side. The helical transmembrane segment at Leu-43–Phe-63 threads the bilayer. Residues Glu-64–Glu-384 lie on the Cytoplasmic side of the membrane. A short sequence motif (D1) is located at residue Asp-123. Asp-179 is a short sequence motif (D2). A short sequence motif (D3) is located at residue Asp-321. The active-site Proton acceptor is Asp-321. Residues Arg-361 to Trp-365 carry the (Q/R)XXRW motif. The chain crosses the membrane as a helical span at residues Cys-385–Phe-405. Over Asn-406 to Lys-408 the chain is Lumenal. A helical membrane pass occupies residues Phe-409 to Leu-429. The Cytoplasmic segment spans residues Thr-430–Arg-466. Residues Trp-467 to Leu-487 traverse the membrane as a helical segment. Residues Gly-488–Leu-509 lie on the Lumenal side of the membrane.

This sequence belongs to the glycosyltransferase 2 family.

It is found in the golgi apparatus membrane. It carries out the reaction an N-acylsphing-4-enine + UDP-alpha-D-glucose = a beta-D-glucosyl-(1&lt;-&gt;1')-N-acylsphing-4-enine + UDP + H(+). It participates in lipid metabolism; sphingolipid metabolism. Its function is as follows. Catalyzes the final step in the biosynthesis of the membrane lipid glucosylceramide (GluCer), the transfer of glucose to ceramide. Glucosylceramides play important roles in growth, differentiation and pathogenicity. This Komagataella phaffii (strain GS115 / ATCC 20864) (Yeast) protein is Ceramide glucosyltransferase.